The chain runs to 354 residues: 3-dehydroquinate synthase (354 aa).

NAD(+)-binding positions include 100 to 104, 124 to 125, Lys-136, Lys-145, and 163 to 166; these read GATGD, TT, and FLKT. Zn(2+) is bound by residues Glu-178, His-242, and His-256.

It belongs to the sugar phosphate cyclases superfamily. Dehydroquinate synthase family. NAD(+) is required as a cofactor. Requires Co(2+) as cofactor. It depends on Zn(2+) as a cofactor.

It is found in the cytoplasm. It carries out the reaction 7-phospho-2-dehydro-3-deoxy-D-arabino-heptonate = 3-dehydroquinate + phosphate. The protein operates within metabolic intermediate biosynthesis; chorismate biosynthesis; chorismate from D-erythrose 4-phosphate and phosphoenolpyruvate: step 2/7. Catalyzes the conversion of 3-deoxy-D-arabino-heptulosonate 7-phosphate (DAHP) to dehydroquinate (DHQ). The protein is 3-dehydroquinate synthase of Staphylococcus aureus (strain MSSA476).